The chain runs to 344 residues: AA9 family lytic polysaccharide monooxygenase cel61A (344 aa).

The first 21 residues, 1 to 21 (MIQKLSNLLVTALAVATGVVG), serve as a signal peptide directing secretion. Histidine 22 is a Cu(2+) binding site. Cystine bridges form between cysteine 77–cysteine 198 and cysteine 118–cysteine 122. Asparagine 80 carries N-linked (GlcNAc...) asparagine glycosylation. Cu(2+) is bound at residue histidine 107. Residue asparagine 158 is glycosylated (N-linked (GlcNAc...) asparagine). Residues histidine 184 and glutamine 193 each contribute to the O2 site. Tyrosine 195 is a Cu(2+) binding site. The tract at residues 262–310 (ATASATVPGGGSGPTSRTTTTARTTQASSRPSSTPPATTSAPAGGPTQT) is disordered. Over residues 275–310 (PTSRTTTTARTTQASSRPSSTPPATTSAPAGGPTQT) the composition is skewed to low complexity. The CBM1 domain maps to 307–343 (PTQTLYGQCGGSGYSGPTRCAPPATCSTLNPYYAQCL).

Belongs to the polysaccharide monooxygenase AA9 family. Cu(2+) is required as a cofactor.

It is found in the secreted. It catalyses the reaction [(1-&gt;4)-beta-D-glucosyl]n+m + reduced acceptor + O2 = 4-dehydro-beta-D-glucosyl-[(1-&gt;4)-beta-D-glucosyl]n-1 + [(1-&gt;4)-beta-D-glucosyl]m + acceptor + H2O.. Functionally, lytic polysaccharide monooxygenase (LPMO) that depolymerizes crystalline and amorphous polysaccharides via the oxidation of scissile alpha- or beta-(1-4)-glycosidic bonds, yielding C1 or C4 oxidation products. Catalysis by LPMOs requires the reduction of the active-site copper from Cu(II) to Cu(I) by a reducing agent and H(2)O(2) or O(2) as a cosubstrate. Shows activity on beta-glucan and amorphous cellulose. Does not show beta-1-3-glucanase, beta-1,6-glucanase, mannanase, xylanase, beta-1,3-galactosidase, amylase, pectinase, nor chitinase activities. This chain is AA9 family lytic polysaccharide monooxygenase cel61A, found in Hypocrea jecorina (Trichoderma reesei).